Reading from the N-terminus, the 301-residue chain is MSTDHSPDPLLLTKAETLVEALPYMQRYAGETFVVKYGGHAMGDPEAARDFAEDIVLLKAVGINPVVVHGGGPQIGKMLKTLGVESRFVDGLRVTDAETARVAEMVLCGSINKEIVSWIAQAGGRAVGLSGKDGRMVVAEKVRRTQRDPDSNIEKAVDLGFVGEPADIDRRVIDTISKAGMIPVVAPIAIGEDGHTYNVNADTMAGAIAIALGAARLFLLTDVAGVLDKEKKLIRDLTPRQINALREDGTIQGGMIPKLETCVHAVEGGVDAAVILDGRVPHAMLIEAFTRRGAGTLIGMG.

Residues 71–72, arginine 93, and asparagine 198 contribute to the substrate site; that span reads GG.

The protein belongs to the acetylglutamate kinase family. ArgB subfamily.

The protein resides in the cytoplasm. It carries out the reaction N-acetyl-L-glutamate + ATP = N-acetyl-L-glutamyl 5-phosphate + ADP. Its pathway is amino-acid biosynthesis; L-arginine biosynthesis; N(2)-acetyl-L-ornithine from L-glutamate: step 2/4. Catalyzes the ATP-dependent phosphorylation of N-acetyl-L-glutamate. The sequence is that of Acetylglutamate kinase from Rhizorhabdus wittichii (strain DSM 6014 / CCUG 31198 / JCM 15750 / NBRC 105917 / EY 4224 / RW1) (Sphingomonas wittichii).